Reading from the N-terminus, the 122-residue chain is UPF0102 protein CPF_1959 (122 aa).

It belongs to the UPF0102 family.

This Clostridium perfringens (strain ATCC 13124 / DSM 756 / JCM 1290 / NCIMB 6125 / NCTC 8237 / Type A) protein is UPF0102 protein CPF_1959.